An 892-amino-acid polypeptide reads, in one-letter code: Iodate reductase subunit IdrA (892 aa).

[3Fe-4S] cluster is bound by residues Cys27, Cys30, and Cys34. Over residues 431 to 442 (RGGGHQRGGLSA) the composition is skewed to gly residues. The interval 431-452 (RGGGHQRGGLSAGGNSEWLSPE) is disordered.

The protein belongs to the prokaryotic molybdopterin-containing oxidoreductase family. In terms of assembly, the iodate reductase (Idr) complex is composed of a molybdopterin-dependent iodate reductase (IdrA and IdrB subunits) and two associated peroxidases (IdrP1 and IdrP2). It depends on [3Fe-4S] cluster as a cofactor. Requires Mo-bis(molybdopterin guanine dinucleotide) as cofactor.

It is found in the periplasm. Functionally, involved in iodate respiration. Probably catalyzes the reduction of iodate (IO(3)(-)) to hypoiodous acid (HIO) and H(2)O(2), using a reduced cytochrome c as the electron donor. The polypeptide is Iodate reductase subunit IdrA (Pseudomonas sp. (strain SCT)).